A 142-amino-acid chain; its full sequence is Hemoglobin larval subunit alpha (142 aa).

The region spanning 2-142 is the Globin domain; that stretch reads VLSAEEKALV…VSAVLTSKYR (141 aa). An O2-binding site is contributed by histidine 59. Histidine 88 is a heme b binding site.

This sequence belongs to the globin family. In terms of assembly, heterotetramer of two alpha chains and two beta chains. In terms of tissue distribution, red blood cells.

Its function is as follows. Involved in oxygen transport from the lung to the various peripheral tissues. The protein is Hemoglobin larval subunit alpha of Pleurodeles waltl (Iberian ribbed newt).